Here is a 240-residue protein sequence, read N- to C-terminus: Enolase-phosphatase E1 (240 aa).

The protein belongs to the HAD-like hydrolase superfamily. MasA/MtnC family. In terms of assembly, monomer. It depends on Mg(2+) as a cofactor.

It carries out the reaction 5-methylsulfanyl-2,3-dioxopentyl phosphate + H2O = 1,2-dihydroxy-5-(methylsulfanyl)pent-1-en-3-one + phosphate. It participates in amino-acid biosynthesis; L-methionine biosynthesis via salvage pathway; L-methionine from S-methyl-5-thio-alpha-D-ribose 1-phosphate: step 3/6. It functions in the pathway amino-acid biosynthesis; L-methionine biosynthesis via salvage pathway; L-methionine from S-methyl-5-thio-alpha-D-ribose 1-phosphate: step 4/6. In terms of biological role, bifunctional enzyme that catalyzes the enolization of 2,3-diketo-5-methylthiopentyl-1-phosphate (DK-MTP-1-P) into the intermediate 2-hydroxy-3-keto-5-methylthiopentenyl-1-phosphate (HK-MTPenyl-1-P), which is then dephosphorylated to form the acireductone 1,2-dihydroxy-3-keto-5-methylthiopentene (DHK-MTPene). This chain is Enolase-phosphatase E1, found in Saccharopolyspora erythraea (strain ATCC 11635 / DSM 40517 / JCM 4748 / NBRC 13426 / NCIMB 8594 / NRRL 2338).